The chain runs to 100 residues: Small ribosomal subunit protein bS6 (100 aa).

The protein belongs to the bacterial ribosomal protein bS6 family.

Functionally, binds together with bS18 to 16S ribosomal RNA. The polypeptide is Small ribosomal subunit protein bS6 (Tropheryma whipplei (strain TW08/27) (Whipple's bacillus)).